The sequence spans 273 residues: Putative cysteine-rich repeat secretory protein 40 (273 aa).

A signal peptide spans 1-32 (MYPSCSLLQRLVWFPFLALVATQLLFIRNVSS). Gnk2-homologous domains lie at 39 to 141 (YLHH…SISV) and 151 to 264 (YENN…LYPF).

It belongs to the cysteine-rich repeat secretory protein family.

It localises to the secreted. This chain is Putative cysteine-rich repeat secretory protein 40 (CRRSP40), found in Arabidopsis thaliana (Mouse-ear cress).